Consider the following 380-residue polypeptide: Glucose-1-phosphate adenylyltransferase (380 aa).

Residues G164, 179–180 (EK), and S190 contribute to the alpha-D-glucose 1-phosphate site.

The protein belongs to the bacterial/plant glucose-1-phosphate adenylyltransferase family. Homotetramer.

The enzyme catalyses alpha-D-glucose 1-phosphate + ATP + H(+) = ADP-alpha-D-glucose + diphosphate. It functions in the pathway glycan biosynthesis; glycogen biosynthesis. In terms of biological role, involved in the biosynthesis of ADP-glucose, a building block required for the elongation reactions to produce glycogen. Catalyzes the reaction between ATP and alpha-D-glucose 1-phosphate (G1P) to produce pyrophosphate and ADP-Glc. The chain is Glucose-1-phosphate adenylyltransferase from Streptococcus sanguinis (strain SK36).